Consider the following 577-residue polypeptide: Mitochondrial-processing peptidase subunit alpha (577 aa).

The transit peptide at Met1–Thr35 directs the protein to the mitochondrion. Positions Ser259–Leu301 are disordered. The segment covering Ser269–Leu301 has biased composition (low complexity).

It belongs to the peptidase M16 family. Heterodimer of mpp (alpha) and pep (beta) subunits, forming the mitochondrial processing protease (MPP) in which mpp is involved in substrate recognition and binding and pep is the catalytic subunit.

It is found in the mitochondrion matrix. Functionally, substrate recognition and binding subunit of the essential mitochondrial processing protease (MPP), which cleaves the mitochondrial sequence off newly imported precursors proteins. This is Mitochondrial-processing peptidase subunit alpha from Neurospora crassa (strain ATCC 24698 / 74-OR23-1A / CBS 708.71 / DSM 1257 / FGSC 987).